A 50-amino-acid chain; its full sequence is Ampulexin 1 (50 aa).

Residues 1–26 (MKAIMVLFYVMMLTIIASVSMVNGSP) form the signal peptide.

Monomer. In terms of tissue distribution, expressed in venom sac and, to a lesser extent, in venom gland. Not expressed in brain.

It is found in the secreted. Functionally, amphipathic peptide which probably adopts an alpha-helical structure. When injected in subesophageal ganglia of cockroach P.americana, a natural host for larvae of A.compressa, dampens the escape response for about 1 hour which may contribute to early stages of hypokinesia. Has no antimicrobial activity against E.coli DH5alpha or B.thuringiensis. Is not cytotoxic in vitro. This Ampulex compressa (Emerald cockroach wasp) protein is Ampulexin 1.